A 252-amino-acid polypeptide reads, in one-letter code: 2-succinyl-6-hydroxy-2,4-cyclohexadiene-1-carboxylate synthase (252 aa).

It belongs to the AB hydrolase superfamily. MenH family. In terms of assembly, monomer.

The catalysed reaction is 5-enolpyruvoyl-6-hydroxy-2-succinyl-cyclohex-3-ene-1-carboxylate = (1R,6R)-6-hydroxy-2-succinyl-cyclohexa-2,4-diene-1-carboxylate + pyruvate. It functions in the pathway quinol/quinone metabolism; 1,4-dihydroxy-2-naphthoate biosynthesis; 1,4-dihydroxy-2-naphthoate from chorismate: step 3/7. The protein operates within quinol/quinone metabolism; menaquinone biosynthesis. In terms of biological role, catalyzes a proton abstraction reaction that results in 2,5-elimination of pyruvate from 2-succinyl-5-enolpyruvyl-6-hydroxy-3-cyclohexene-1-carboxylate (SEPHCHC) and the formation of 2-succinyl-6-hydroxy-2,4-cyclohexadiene-1-carboxylate (SHCHC). In Salmonella arizonae (strain ATCC BAA-731 / CDC346-86 / RSK2980), this protein is 2-succinyl-6-hydroxy-2,4-cyclohexadiene-1-carboxylate synthase.